The sequence spans 709 residues: Meiotic sister-chromatid recombination protein 6, mitochondrial (709 aa).

Residues 1-29 constitute a mitochondrion transit peptide; the sequence is MLRINQRLLVRSLRDAQYQYLKSTALRFL.

It is found in the mitochondrion. Its function is as follows. May be involved in the control of meiotic sister-chromatid recombination. The polypeptide is Meiotic sister-chromatid recombination protein 6, mitochondrial (MSC6) (Candida glabrata (strain ATCC 2001 / BCRC 20586 / JCM 3761 / NBRC 0622 / NRRL Y-65 / CBS 138) (Yeast)).